Reading from the N-terminus, the 370-residue chain is 3-isopropylmalate dehydrogenase (370 aa).

77-90 (GPKWDAVPYEVRPE) contacts NAD(+). Residues Arg97, Arg107, Arg135, and Asp226 each contribute to the substrate site. The Mg(2+) site is built by Asp226, Asp250, and Asp254. NAD(+) is bound at residue 290-302 (GSAPDIAGTGVAN).

This sequence belongs to the isocitrate and isopropylmalate dehydrogenases family. LeuB type 1 subfamily. In terms of assembly, homodimer. Requires Mg(2+) as cofactor. Mn(2+) is required as a cofactor.

It is found in the cytoplasm. The catalysed reaction is (2R,3S)-3-isopropylmalate + NAD(+) = 4-methyl-2-oxopentanoate + CO2 + NADH. It participates in amino-acid biosynthesis; L-leucine biosynthesis; L-leucine from 3-methyl-2-oxobutanoate: step 3/4. Catalyzes the oxidation of 3-carboxy-2-hydroxy-4-methylpentanoate (3-isopropylmalate) to 3-carboxy-4-methyl-2-oxopentanoate. The product decarboxylates to 4-methyl-2 oxopentanoate. This Rhizobium meliloti (strain 1021) (Ensifer meliloti) protein is 3-isopropylmalate dehydrogenase.